An 859-amino-acid polypeptide reads, in one-letter code: MTYKYNCCDDGSGTTVGSVVRFDNVTLLIDPGWNPSKVSYEQCIKYWEKVIPEIDVIILSQPTIECLGAHSLLYYNFTSHFISRIQVYATLPVINLGRVSTIDSYASAGVIGPYDTNKLDLEDIEISFDHIVPLKYSQLVDLRSRYDGLTLLAYNAGVCPGGSIWCISTYSEKLVYAKRWNHTRDNILNAASILDATGKPLSTLMRPSAIITTLDRFGSSQPFKKRSKIFKDTLKKGLSSDGSVIIPVDMSGKFLDLFTQVHELLFESTKINAHTQVPVLILSYARGRTLTYAKSMLEWLSPSLLKTWENRNNTSPFEIGSRIKIIAPNELSKYPGSKICFVSEVGALINEVIIKVGNSEKTTLILTKPSFECASSLDKILEIVEQDERNWKTFPEDGKSFLCDNYISIDTIKEEPLSKEETEAFKVQLKEKKRDRNKKILLVKRESKKLANGNAIIDDTNGERAMRNQDILVENVNGVPPIDHIMGGDEDDDEEEENDNLLNLLKDNSEKSAAKKNTEVPVDIIIQPSAASKHKMFPFNPAKIKKDDYGTVVDFTMFLPDDSDNVNQNSRKRPLKDGAKTTSPVNEEDNKNEEEDGYNMSDPISKRSKHRASRYSGFSGTGEAENFDNLDYLKIDKTLSKRTISTVNVQLKCSVVILNLQSLVDQRSASIIWPSLKSRKIVLSAPKQIQNEEITAKLIKKNIEVVNMPLNKIVEFSTTIKTLDISIDSNLDNLLKWQRISDSYTVATVVGRLVKESLPQVNNHQKTASRSKLVLKPLHGSSRSHKTGALSIGDVRLAQLKKLLTEKNYIAEFKGEGTLVINEKVAVRKINDAETIIDGTPSELFDTVKKLVTDMLAKI.

The segment at 560 to 611 (PDDSDNVNQNSRKRPLKDGAKTTSPVNEEDNKNEEEDGYNMSDPISKRSKHR) is disordered. Acidic residues predominate over residues 586–597 (NEEDNKNEEEDG).

In terms of assembly, component of the cleavage and polyadenylation factor (CPF) complex, which is composed of at least PTI1, SYC1, SSU72, GLC7, MPE1, REF2, PFS2, PTA1, YSH1/BRR5, SWD2, CFT2/YDH1, YTH1, CFT1/YHH1, FIP1 and PAP1. Interacts with the CTD domain of RPB1/RNA polymerase II; the interaction is enhanced upon phosphorylation of the RPB1 CTD domain. Interacts with PCF11.

The protein resides in the nucleus. In terms of biological role, RNA-binding component of the cleavage and polyadenylation factor (CPF) complex, which plays a key role in polyadenylation-dependent pre-mRNA 3'-end formation and cooperates with cleavage factors including the CFIA complex and NAB4/CFIB. May be involved in poly(A)-site recognition. May be involved in the association of the CPF, CPFIA and RNA polymerase II complexes. In Saccharomyces cerevisiae (strain ATCC 204508 / S288c) (Baker's yeast), this protein is Cleavage factor two protein 2 (CFT2).